Reading from the N-terminus, the 300-residue chain is Tyrosine recombinase XerC (300 aa).

In terms of domain architecture, Core-binding (CB) spans 2–88; sequence IQEGKLEQQF…SLRSFYTFLL (87 aa). Positions 109 to 294 constitute a Tyr recombinase domain; it reads RLPKFFYSEE…TKEHLKSTYM (186 aa). Residues arginine 150, lysine 174, histidine 246, arginine 249, and histidine 272 contribute to the active site. The active-site O-(3'-phospho-DNA)-tyrosine intermediate is the tyrosine 281.

It belongs to the 'phage' integrase family. XerC subfamily. As to quaternary structure, forms a cyclic heterotetrameric complex composed of two molecules of XerC and two molecules of XerD.

The protein localises to the cytoplasm. In terms of biological role, site-specific tyrosine recombinase, which acts by catalyzing the cutting and rejoining of the recombining DNA molecules. The XerC-XerD complex is essential to convert dimers of the bacterial chromosome into monomers to permit their segregation at cell division. It also contributes to the segregational stability of plasmids. The polypeptide is Tyrosine recombinase XerC (Listeria monocytogenes serovar 1/2a (strain ATCC BAA-679 / EGD-e)).